A 66-amino-acid chain; its full sequence is Type 3 secretion system chaperone YscE (66 aa).

This sequence belongs to the YscE family. Component of the heterodimeric YscE-YscG chaperone. The YscE-YscG chaperone forms a stable ternary complex with YscF/SctF.

The protein localises to the cytoplasm. In terms of biological role, chaperone of the type III secretion system (T3SS), also called injectisome, which is used to inject bacterial effector proteins into eukaryotic host cells. Along with YscG, prevents premature polymerization of the YscF/SctF needle protein within the cytoplasm. Required for Yop secretion. The sequence is that of Type 3 secretion system chaperone YscE from Yersinia enterocolitica.